Here is a 676-residue protein sequence, read N- to C-terminus: Head-specific guanylate cyclase (676 aa).

The Guanylate cyclase domain occupies 466–593 (TILFSDIVGF…HSVTIANKFE (128 aa)).

This sequence belongs to the adenylyl cyclase class-4/guanylyl cyclase family. Heterodimer. As to expression, head, where it is preferentially expressed in the CNS and the retina. Not found in bodies.

The protein localises to the cytoplasm. It catalyses the reaction GTP = 3',5'-cyclic GMP + diphosphate. Functionally, may have a role in phototransduction. Catalyzes the conversion of GTP to cGMP, a common second messenger that is utilized in a wide variety of cells and signal transduction pathways. A second subunit is required for enzyme activity. This chain is Head-specific guanylate cyclase (Gycalpha99B), found in Drosophila melanogaster (Fruit fly).